The sequence spans 241 residues: Transcriptional regulatory protein SrrA (241 aa).

A Response regulatory domain is found at Glu4–Leu117. Asp53 bears the 4-aspartylphosphate mark. A DNA-binding region (ompR/PhoB-type) is located at residues Arg133 to Val233.

In terms of processing, phosphorylated by SrrB.

The protein localises to the cytoplasm. Functionally, member of the two-component regulatory system SrrA/SrrB, which is involved in the global regulation of staphylococcal virulence factors in response to environmental oxygen levels as well as biofilm formation. Also plays an essential role in host-derived nitric oxide resistance by regulating hmp/flavohemoglobin, an enzyme that detoxifies nitric oxide by converting it to nitrate. Functions as a transcription regulator by direct binding to promoter regions of target genes. This Staphylococcus aureus (strain NCTC 8325 / PS 47) protein is Transcriptional regulatory protein SrrA (srrA).